The chain runs to 131 residues: Large ribosomal subunit protein bL17 (131 aa).

It belongs to the bacterial ribosomal protein bL17 family. In terms of assembly, part of the 50S ribosomal subunit. Contacts protein L32.

This chain is Large ribosomal subunit protein bL17, found in Shewanella baltica (strain OS223).